A 214-amino-acid polypeptide reads, in one-letter code: ATP-dependent Clp protease proteolytic subunit 2 (214 aa).

Catalysis depends on S110, which acts as the Nucleophile. H135 is an active-site residue.

Belongs to the peptidase S14 family. As to quaternary structure, fourteen ClpP subunits assemble into 2 heptameric rings which stack back to back to give a disk-like structure with a central cavity, resembling the structure of eukaryotic proteasomes.

It localises to the cytoplasm. It carries out the reaction Hydrolysis of proteins to small peptides in the presence of ATP and magnesium. alpha-casein is the usual test substrate. In the absence of ATP, only oligopeptides shorter than five residues are hydrolyzed (such as succinyl-Leu-Tyr-|-NHMec, and Leu-Tyr-Leu-|-Tyr-Trp, in which cleavage of the -Tyr-|-Leu- and -Tyr-|-Trp bonds also occurs).. Functionally, cleaves peptides in various proteins in a process that requires ATP hydrolysis. Has a chymotrypsin-like activity. Plays a major role in the degradation of misfolded proteins. The protein is ATP-dependent Clp protease proteolytic subunit 2 of Mycobacterium bovis (strain ATCC BAA-935 / AF2122/97).